The sequence spans 213 residues: Adenylate kinase (213 aa).

Position 10 to 15 (10 to 15 (GSGKGT)) interacts with ATP. An NMP region spans residues 30 to 59 (STGDLFRTNIENDTPLGKEIKQIVENGQLV). Residues Thr-31, Arg-36, 57–59 (QLV), 85–88 (GFPR), and Gln-92 each bind AMP. The interval 121 to 158 (GRRICQSCCKIFNIYTLPTKEKEICDFCQGILYQRKDD) is LID. Arg-122 is an ATP binding site. Zn(2+)-binding residues include Cys-125 and Cys-128. Residue 131–132 (IF) coordinates ATP. Cys-145 and Cys-148 together coordinate Zn(2+). AMP-binding residues include Arg-155 and Arg-166. An ATP-binding site is contributed by Lys-194.

The protein belongs to the adenylate kinase family. In terms of assembly, monomer.

Its subcellular location is the cytoplasm. It catalyses the reaction AMP + ATP = 2 ADP. It functions in the pathway purine metabolism; AMP biosynthesis via salvage pathway; AMP from ADP: step 1/1. Catalyzes the reversible transfer of the terminal phosphate group between ATP and AMP. Plays an important role in cellular energy homeostasis and in adenine nucleotide metabolism. This is Adenylate kinase from Borrelia duttonii (strain Ly).